A 133-amino-acid polypeptide reads, in one-letter code: Large ribosomal subunit protein bL17 (133 aa).

The protein belongs to the bacterial ribosomal protein bL17 family. In terms of assembly, part of the 50S ribosomal subunit. Contacts protein L32.

The polypeptide is Large ribosomal subunit protein bL17 (Ehrlichia chaffeensis (strain ATCC CRL-10679 / Arkansas)).